A 492-amino-acid chain; its full sequence is MKQKCVLIITDGIGYNKNSKFNAFEAAKKPSYEKLFKEVPNSLLKTSGLAVGLPEGQMGNSEVGHMCIGSGRIIYQNLVRINKAIENKELEKNENLQKLLAKCKRVHIIGLYSDGGVHSMDTHFKAMLEICAKNGNEVFAHAITDGRDVNPKSGLNFIKDLKEFCENLGVHFATLCGRFYAMDRDKRWDRVKECYECLLGKAYKVPNLLEYLQKSYDENVTDEFIKAVQNENYKGMREEDGIIFINFRNDRMKQLVEVLNSKDFKEFEREKIFENLLTMSVYDDKFKLPVLFEKEKIENTLAQVISKAGLSQLHTAETEKYAHVTFFFNGGKEELLENETRVLIPSPKVKTYDEKPQMSAFEVCDAVKKGIEKGEDFIVVNFANGDMVGHTGDFNAAIKAVEAVDTCLGEIVECAKKHDYAFIITSDHGNCEAMQDEKGNLLTNHTTFDVFVFVQAKGVSKIKDNMGLSNIAASVLKILDLEIPKEMNEALF.

Asp11 and Ser61 together coordinate Mn(2+). The active-site Phosphoserine intermediate is the Ser61. Substrate-binding positions include His118, 147-148, Arg178, Arg184, 248-251, and Lys320; these read RD and RNDR. Mn(2+) is bound by residues Asp386, His390, Asp427, His428, and His445.

Belongs to the BPG-independent phosphoglycerate mutase family. Monomer. Mn(2+) serves as cofactor.

It carries out the reaction (2R)-2-phosphoglycerate = (2R)-3-phosphoglycerate. The protein operates within carbohydrate degradation; glycolysis; pyruvate from D-glyceraldehyde 3-phosphate: step 3/5. In terms of biological role, catalyzes the interconversion of 2-phosphoglycerate and 3-phosphoglycerate. In Campylobacter jejuni subsp. jejuni serotype O:23/36 (strain 81-176), this protein is 2,3-bisphosphoglycerate-independent phosphoglycerate mutase.